The sequence spans 142 residues: Large ribosomal subunit protein uL13 (142 aa).

This sequence belongs to the universal ribosomal protein uL13 family. In terms of assembly, part of the 50S ribosomal subunit.

This protein is one of the early assembly proteins of the 50S ribosomal subunit, although it is not seen to bind rRNA by itself. It is important during the early stages of 50S assembly. The protein is Large ribosomal subunit protein uL13 of Treponema denticola (strain ATCC 35405 / DSM 14222 / CIP 103919 / JCM 8153 / KCTC 15104).